Consider the following 306-residue polypeptide: Erythromycin 3''-O-methyltransferase (306 aa).

S-adenosyl-L-methionine-binding residues include L157 and H162.

This sequence belongs to the methyltransferase superfamily.

It catalyses the reaction erythromycin C + S-adenosyl-L-methionine = erythromycin A + S-adenosyl-L-homocysteine + H(+). It carries out the reaction erythromycin D + S-adenosyl-L-methionine = erythromycin B + S-adenosyl-L-homocysteine + H(+). It participates in antibiotic biosynthesis; erythromycin biosynthesis. S-adenosyl-L-methionine-dependent O-methyltransferase that catalyzes the last step in the erythromycin biosynthesis pathway. Methylates the position 3 of the mycarosyl moiety of erythromycin C, forming the most active form of the antibiotic, erythromycin A. Can also methylate the precursor erythromycin D, forming erythromycin B. In Saccharopolyspora erythraea (strain ATCC 11635 / DSM 40517 / JCM 4748 / NBRC 13426 / NCIMB 8594 / NRRL 2338), this protein is Erythromycin 3''-O-methyltransferase (eryG).